The primary structure comprises 321 residues: Degreening-related gene dee76 protein (321 aa).

It belongs to the Mo25 family.

The chain is Degreening-related gene dee76 protein (DEE76) from Auxenochlorella protothecoides (Green microalga).